Here is an 880-residue protein sequence, read N- to C-terminus: MANLTPMMQQYFDIKKQYPDSLLFFRMGDFYELFFQDAETASRELEITLTGRSCGLEERAPMCGVPHHAATGYIDRLVSNGYKVAICEQIEDVSQAKGIVKRDVVRVITPGTLIDTQLLDDKKNNYLMSVFGSRTGFGLAYVDISTGDLFATEIKENIHPQMLIDEMGRVLPQELLYFIETDKEDPTIISMIKKRFDFYTNGYEEWSYEDTFALNQIKDHFNVVSLEGLGFHPSHLGINAAGALFHYLKTTQKRALEHINHINVYSIHEKMTLDINTRKNLELTETIRSKSKKGSLLGVLDKTSTAMGGRMLRKWIEAPLIDPVIINKRLEAVQLLKEQIELRQELKESLKKIYDLERLAGKISYGSVTPRDLIALKNSLSYLPSIINGLEKIQGETFQSLVQSIDPLDEVHSLVELSILEDAPLSSKDGGIIQEGYHKEVDELKNASTEGRQWIAQLEQKERVNSGIKSLKIKYNKIFGYYIEITKSNLSMVPTEYIRKQTLANCERYVTPELKEIESKILGAEEKVILLEYHLFIEVREKIAHEITRIQQTARAIAELDVLYSFAEIAAENNFIKPHINTSNEIKIVEGRHPVVELTFNKESFVPNDTYMDNRDCSMSIITGPNMAGKSTYMRQVALIVLMAQIGSFVPASEASIGIVDRIFTRIGASDDLAQGHSTFMVEMSEMANILNNATANSLVILDEIGRGTSTFDGLSIAWAVIEYMQQYKKSKTLFSTHYHELTELEGKIQGVKNYNILVEEDGEEIVFLRKVVSGSTSKSYGIQVAKLAGLPLNTLIRAQEILSDLEKKNNEIKIPAEEEIALSRESEGNSRDTNGIQLDLTSFSYNEIIEDIRSLNLLETTPMTAMNLLYQLQKRISSL.

624–631 is an ATP binding site; it reads GPNMAGKS.

The protein belongs to the DNA mismatch repair MutS family.

Its function is as follows. This protein is involved in the repair of mismatches in DNA. It is possible that it carries out the mismatch recognition step. This protein has a weak ATPase activity. In Alkaliphilus metalliredigens (strain QYMF), this protein is DNA mismatch repair protein MutS.